The primary structure comprises 840 residues: Exocyst complex component 7 (840 aa).

A disordered region spans residues 1–112 (MSAPPRLSAR…ATSTTSPFSY (112 aa)). Residues 19–31 (SNAPSPTSPTGLK) are compositionally biased toward polar residues. 2 stretches are compositionally biased toward low complexity: residues 50-73 (KSSVGISSLPTIPSTKSTSPTLPK) and 83-111 (QQQQQQHTNKSTSPSSNTPTATSTTSPFS). Residues 193–227 (KNNATSELTEQDDQLENDKRDLQFIKEQLEKNNSM) adopt a coiled-coil conformation. Residues 601-638 (QDNNNSNSNSNAPSSTSSNSKSSSSSSSSSSSNSASST) form a disordered region. The segment covering 603-637 (NNNSNSNSNAPSSTSSNSKSSSSSSSSSSSNSASS) has biased composition (low complexity).

The protein belongs to the EXO70 family. In terms of assembly, the exocyst complex is composed of sec3/exoc1, sec5/exoc2, sec6/exoc3, sec8/exoc4, sec10/exoc5, sec15/exoc6, exo70/exoc7 and exo84/exoc8.

It is found in the cytoplasm. It localises to the cytosol. Its subcellular location is the cell membrane. The protein resides in the midbody. The protein localises to the midbody ring. Component of the exocyst complex involved in the docking of exocytic vesicles with fusion sites on the plasma membrane. The polypeptide is Exocyst complex component 7 (exoc7) (Dictyostelium discoideum (Social amoeba)).